We begin with the raw amino-acid sequence, 582 residues long: Methionine--tRNA ligase (582 aa).

Positions 24–34 match the 'HIGH' region motif; sequence PYIYAVPHLGN. The Zn(2+) site is built by cysteine 156, cysteine 159, cysteine 169, and cysteine 172. Residues 346-350 carry the 'KMSKS' region motif; that stretch reads KFSKS. Lysine 349 serves as a coordination point for ATP.

This sequence belongs to the class-I aminoacyl-tRNA synthetase family. MetG type 1 subfamily. Requires Zn(2+) as cofactor.

The protein localises to the cytoplasm. It catalyses the reaction tRNA(Met) + L-methionine + ATP = L-methionyl-tRNA(Met) + AMP + diphosphate. Is required not only for elongation of protein synthesis but also for the initiation of all mRNA translation through initiator tRNA(fMet) aminoacylation. This chain is Methionine--tRNA ligase, found in Caldivirga maquilingensis (strain ATCC 700844 / DSM 13496 / JCM 10307 / IC-167).